The sequence spans 416 residues: Cysteate synthase (416 aa).

Lys104 carries the post-translational modification N6-(pyridoxal phosphate)lysine. Asn130 serves as a coordination point for pyridoxal 5'-phosphate.

This sequence belongs to the threonine synthase family. Cysteate synthase subfamily. As to quaternary structure, homotrimer. The cofactor is pyridoxal 5'-phosphate.

The catalysed reaction is O-phospho-L-serine + sulfite + H(+) = L-cysteate + phosphate. It participates in cofactor biosynthesis; coenzyme M biosynthesis. With respect to regulation, is inhibited by AP3 (DL-2-amino-3-phosphonopropionate) and, to a lesser extent, by L-aspartate or AP4 (DL-2-amino-4-phosphonobutyrate). Is also inhibited by EDTA in vitro. Specifically catalyzes the beta-elimination of phosphate from L-phosphoserine and the beta-addition of sulfite to the dehydroalanine intermediate to produce L-cysteate. Does not display threonine synthase activity like the paralog protein ThrC. The polypeptide is Cysteate synthase (Methanosarcina acetivorans (strain ATCC 35395 / DSM 2834 / JCM 12185 / C2A)).